Reading from the N-terminus, the 146-residue chain is Small ribosomal subunit protein bS16 (146 aa).

The span at 84-102 shows a compositional bias: basic and acidic residues; sequence SHLEAQKAAVERLGRRKDY. A disordered region spans residues 84–146; that stretch reads SHLEAQKAAV…DAPAAEATTE (63 aa). A compositionally biased stretch (low complexity) spans 110-119; sequence APKAAPVAEA. Acidic residues predominate over residues 120-130; that stretch reads PAEEAPAEEPA. A compositionally biased stretch (low complexity) spans 131–146; that stretch reads AEASTDDAPAAEATTE.

The protein belongs to the bacterial ribosomal protein bS16 family.

The protein is Small ribosomal subunit protein bS16 of Rhodopirellula baltica (strain DSM 10527 / NCIMB 13988 / SH1).